The chain runs to 181 residues: Ribonuclease HII (181 aa).

An RNase H type-2 domain is found at 1-181; sequence MICGIDEVGR…SLHRKNFKLI (181 aa). A divalent metal cation is bound by residues Asp-6, Glu-7, and Asp-98.

It belongs to the RNase HII family. Requires Mn(2+) as cofactor. It depends on Mg(2+) as a cofactor.

It localises to the cytoplasm. The enzyme catalyses Endonucleolytic cleavage to 5'-phosphomonoester.. In terms of biological role, endonuclease that specifically degrades the RNA of RNA-DNA hybrids. The chain is Ribonuclease HII (rnhB) from Borreliella burgdorferi (strain ATCC 35210 / DSM 4680 / CIP 102532 / B31) (Borrelia burgdorferi).